Here is a 1070-residue protein sequence, read N- to C-terminus: Error-prone DNA polymerase (1070 aa).

This sequence belongs to the DNA polymerase type-C family. DnaE2 subfamily.

The protein localises to the cytoplasm. It catalyses the reaction DNA(n) + a 2'-deoxyribonucleoside 5'-triphosphate = DNA(n+1) + diphosphate. DNA polymerase involved in damage-induced mutagenesis and translesion synthesis (TLS). It is not the major replicative DNA polymerase. The polypeptide is Error-prone DNA polymerase (Aromatoleum aromaticum (strain DSM 19018 / LMG 30748 / EbN1) (Azoarcus sp. (strain EbN1))).